The following is a 2318-amino-acid chain: Neurogenic locus notch homolog protein 3 (2318 aa).

Positions 1–14 are enriched in basic residues; the sequence is MGLGARGRRRRRRL. A disordered region spans residues 1–20; it reads MGLGARGRRRRRRLMALPPP. A signal peptide spans 1-39; that stretch reads MGLGARGRRRRRRLMALPPPPPPMRALPLLLLLAGLGAA. EGF-like domains follow at residues 40 to 78, 79 to 119, and 120 to 157; these read APPCLDGSPCANGGRCTHQQPSLEAACLCLPGWVGERCQ, LEDP…PDCS, and QPDPCVSRPCVHGAPCSVGPDGRFACACPPGYQGQSCQ. Over 40–1643 the chain is Extracellular; it reads APPCLDGSPC…PLEAPEQSVP (1604 aa). Disulfide bonds link Cys-43–Cys-55, Cys-49–Cys-66, Cys-68–Cys-77, Cys-83–Cys-94, Cys-88–Cys-107, Cys-109–Cys-118, Cys-124–Cys-135, Cys-129–Cys-145, Cys-147–Cys-156, Cys-163–Cys-175, Cys-169–Cys-184, Cys-186–Cys-195, Cys-202–Cys-213, Cys-207–Cys-223, Cys-225–Cys-234, Cys-241–Cys-252, Cys-246–Cys-261, Cys-263–Cys-272, Cys-279–Cys-292, Cys-286–Cys-301, Cys-303–Cys-312, Cys-319–Cys-330, Cys-324–Cys-339, Cys-341–Cys-350, Cys-356–Cys-367, Cys-361–Cys-378, Cys-380–Cys-389, Cys-396–Cys-409, Cys-403–Cys-418, Cys-420–Cys-429, Cys-436–Cys-447, Cys-441–Cys-456, Cys-458–Cys-467, Cys-474–Cys-485, Cys-479–Cys-494, Cys-496–Cys-505, Cys-512–Cys-523, Cys-517–Cys-532, Cys-534–Cys-543, Cys-550–Cys-560, Cys-555–Cys-569, Cys-571–Cys-580, Cys-587–Cys-598, Cys-592–Cys-607, Cys-609–Cys-618, Cys-625–Cys-635, Cys-630–Cys-644, Cys-646–Cys-655, Cys-662–Cys-673, Cys-667–Cys-682, Cys-684–Cys-693, Cys-700–Cys-710, Cys-705–Cys-719, Cys-721–Cys-730, Cys-739–Cys-750, Cys-744–Cys-759, Cys-761–Cys-770, Cys-776–Cys-787, Cys-781–Cys-797, Cys-799–Cys-808, Cys-815–Cys-827, Cys-821–Cys-836, Cys-838–Cys-847, Cys-854–Cys-865, Cys-859–Cys-874, Cys-876–Cys-885, Cys-892–Cys-902, Cys-897–Cys-911, Cys-913–Cys-922, Cys-929–Cys-940, Cys-934–Cys-949, Cys-951–Cys-960, Cys-967–Cys-978, Cys-972–Cys-987, Cys-989–Cys-998, Cys-1005–Cys-1016, Cys-1010–Cys-1023, Cys-1025–Cys-1034, Cys-1041–Cys-1062, Cys-1056–Cys-1071, Cys-1073–Cys-1082, Cys-1089–Cys-1100, Cys-1094–Cys-1109, Cys-1111–Cys-1120, Cys-1127–Cys-1138, Cys-1132–Cys-1147, Cys-1149–Cys-1158, Cys-1165–Cys-1183, Cys-1177–Cys-1192, Cys-1194–Cys-1203, Cys-1210–Cys-1223, Cys-1215–Cys-1233, Cys-1235–Cys-1244, Cys-1251–Cys-1262, Cys-1256–Cys-1276, Cys-1278–Cys-1287, Cys-1294–Cys-1305, Cys-1299–Cys-1314, and Cys-1316–Cys-1325. In terms of domain architecture, EGF-like 4; calcium-binding spans 159–196; it reads DIDECRSGTTCRHGGTCLNTPGSFRCQCPLGYTGLLCE. The EGF-like 5 domain maps to 198-235; it reads PVVPCAPSPCRNGGTCRQSSDVTYDCACLPGFEGQNCE. The EGF-like 6; calcium-binding domain maps to 237-273; it reads NVDDCPGHRCLNGGTCVDGVNTYNCQCPPEWTGQFCT. In terms of domain architecture, EGF-like 7 spans 275–313; the sequence is DVDECQLQPNACHNGGTCFNLLGGHSCVCVNGWTGESCS. The EGF-like 8; calcium-binding domain occupies 315–351; the sequence is NIDDCATAVCFHGATCHDRVASFYCACPMGKTGLLCH. Residues 352–390 enclose the EGF-like 9 domain; it reads LDDACVSNPCHEDAICDTNPVSGRAICTCPPGFTGGACD. An EGF-like 10; calcium-binding domain is found at 392-430; that stretch reads DVDECSIGANPCEHLGRCVNTQGSFLCQCGRGYTGPRCE. Positions 432–468 constitute an EGF-like 11; calcium-binding domain; the sequence is DVNECLSGPCRNQATCLDRIGQFTCICMAGFTGTYCE. One can recognise an EGF-like 12; calcium-binding domain in the interval 470-506; sequence DIDECQSSPCVNGGVCKDRVNGFSCTCPSGFSGSMCQ. The 37-residue stretch at 508–544 folds into the EGF-like 13; calcium-binding domain; it reads DVDECASTPCRNGAKCVDQPDGYECRCAEGFEGTLCE. Residues 546-581 enclose the EGF-like 14; calcium-binding domain; that stretch reads NVDDCSPDPCHHGRCVDGIASFSCACAPGYTGIRCE. Residues 583-619 enclose the EGF-like 15; calcium-binding domain; that stretch reads QVDECRSQPCRYGGKCLDLVDKYLCRCPPGTTGVNCE. The EGF-like 16; calcium-binding domain occupies 621 to 656; it reads NIDDCASNPCTFGVCRDGINRYDCVCQPGFTGPLCN. The EGF-like 17; calcium-binding domain occupies 658 to 694; the sequence is EINECASSPCGEGGSCVDGENGFHCLCPPGSLPPLCL. EGF-like domains follow at residues 696-731, 735-771, and 772-809; these read ANHPCAHKPCSHGVCHDAPGGFRCVCEPGWSGPRCS, APDACESQPCQAGGTCTSDGIGFRCTCAPGFQGHQCE, and VLSPCTPSLCEHGGHCESDPDRLTVCSCPPGWQGPRCQ. The EGF-like 21; calcium-binding domain occupies 811–848; the sequence is DVDECAGASPCGPHGTCTNLPGNFRCICHRGYTGPFCD. The EGF-like 22; calcium-binding domain maps to 850-886; that stretch reads DIDDCDPNPCLHGGSCQDGVGSFSCSCLDGFAGPRCA. In terms of domain architecture, EGF-like 23; calcium-binding spans 888-923; that stretch reads DVDECLSSPCGPGTCTDHVASFTCACPPGYGGFHCE. 5 EGF-like domains span residues 925–961, 963–999, 1001–1035, 1037–1083, and 1085–1121; these read DLPDCSPSSCFNGGTCVDGVSSFSCLCRPGYTGTHCQ, EADPCFSRPCLHGGICNPTHPGFECTCREGFTGSQCQ, PVDWCSQAPCQNGGRCVQTGAYCICPPGWSGRLCD, QSLP…SHCE, and EVDPCTAQPCQHGGTCRGYMGGYVCECPAGYAGDSCE. The 37-residue stretch at 1123 to 1159 folds into the EGF-like 29; calcium-binding domain; the sequence is NIDECASQPCQNGGSCIDLVARYLCSCPPGTLGVLCE. The region spanning 1161–1204 is the EGF-like 30; calcium-binding domain; it reads NEDDCDLGPSLDSGVQCLHNGTCVDLVGGFRCNCPPGYTGLHCE. N-linked (GlcNAc...) asparagine glycosylation occurs at Asn-1180. 4 EGF-like domains span residues 1206–1245, 1247–1288, 1290–1326, and 1336–1374; these read DINECRPGACHAAHTRDCLQDPGGHFRCVCHPGFTGPRCQ, ALSP…LRCE, VARSCRELQCPVGIPCQQTARGPRCACPPGLSGPSCR, and TNASCASAPCLHGGSCLPVQSVPFFRCVCAPGWGGPRCE. N-linked (GlcNAc...) asparagine glycosylation occurs at Asn-1337. 12 disulfides stabilise this stretch: Cys-1340–Cys-1351, Cys-1345–Cys-1362, Cys-1364–Cys-1373, Cys-1388–Cys-1411, Cys-1393–Cys-1406, Cys-1402–Cys-1418, Cys-1429–Cys-1452, Cys-1434–Cys-1447, Cys-1443–Cys-1459, Cys-1468–Cys-1494, Cys-1476–Cys-1489, and Cys-1485–Cys-1501. 3 LNR repeats span residues 1388–1428, 1429–1466, and 1468–1506; these read CPRA…PWRQ, CEALQCWRLFNNSRCDPACSSPACLYDNFDCYSGGRDR, and CNPVYEKYCADHFADGRCDQGCNTEECGWDGLDCASEVP. Asn-1439 is a glycosylation site (N-linked (GlcNAc...) asparagine). The chain crosses the membrane as a helical span at residues 1644 to 1664; the sequence is LLPLLVAGAVFLLIIFILGVM. Topologically, residues 1665-2318 are cytoplasmic; the sequence is VARRKREHST…EVTPKRQVMA (654 aa). 5 ANK repeats span residues 1839 to 1868, 1872 to 1902, 1906 to 1935, 1939 to 1968, and 1972 to 2001; these read TGETALHLAARYARADAAKRLLDAGADTNA, SGRTPLHTAVTADAQGVFQILIRNRSTDLDA, DGSTALILAARLAVEGMVEELIASHADVNA, LGKSALHWAAAVNNVEATLALLKNGANKDM, and KEETPLFLAAREGSYEAAKLLLDHLANREI. 2 disordered regions span residues 2025–2045 and 2058–2126; these read LDQPSGPRSPSGPHGLGPLLC and QSGT…PLEG. The segment covering 2028–2045 has biased composition (low complexity); that stretch reads PSGPRSPSGPHGLGPLLC. Arg-2174 is modified (omega-N-methylarginine). Low complexity predominate over residues 2184-2193; that stretch reads SFLLPLAPGP. The interval 2184–2318 is disordered; sequence SFLLPLAPGP…EVTPKRQVMA (135 aa). The interval 2242-2261 is PEST-like; the sequence is HPYLTPSPESPEHWASPSPP. Residues 2262–2282 are compositionally biased toward low complexity; that stretch reads SLSDWSDSTPSPATATNATAS. Residues 2296-2305 show a composition bias toward polar residues; it reads SLPQSQTQLG.

The protein belongs to the NOTCH family. In terms of assembly, interacts with PSMA1. Heterodimer of a C-terminal fragment N(TM) and a N-terminal fragment N(EC) which are probably linked by disulfide bonds. Interacts with MAML1, MAML2 and MAML3 which act as transcriptional coactivators for NOTCH3. Interacts with HIF1AN. In terms of processing, synthesized in the endoplasmic reticulum as an inactive form which is proteolytically cleaved by a furin-like convertase in the trans-Golgi network before it reaches the plasma membrane to yield an active, ligand-accessible form. Cleavage results in a C-terminal fragment N(TM) and a N-terminal fragment N(EC). Following ligand binding, it is cleaved by TNF-alpha converting enzyme (TACE) to yield a membrane-associated intermediate fragment called notch extracellular truncation (NEXT). This fragment is then cleaved by presenilin dependent gamma-secretase to release a notch-derived peptide containing the intracellular domain (NICD) from the membrane. Post-translationally, phosphorylated. Hydroxylated by HIF1AN. As to expression, proliferating neuroepithelium.

Its subcellular location is the cell membrane. The protein resides in the nucleus. Functionally, functions as a receptor for membrane-bound ligands Jagged1, Jagged2 and Delta1 to regulate cell-fate determination. Upon ligand activation through the released notch intracellular domain (NICD) it forms a transcriptional activator complex with RBPJ/RBPSUH and activates genes of the enhancer of split locus. Affects the implementation of differentiation, proliferation and apoptotic programs. May play a role during CNS development. The protein is Neurogenic locus notch homolog protein 3 (Notch3) of Mus musculus (Mouse).